The sequence spans 643 residues: Threonine--tRNA ligase (643 aa).

The region spanning 1–61 is the TGS domain; that stretch reads MPIITLPDGS…TEDSTLEIIT (61 aa). Residues 243–534 are catalytic; the sequence is DHRKIGKALD…ITEEYAGFFP (292 aa). Zn(2+)-binding residues include Cys334, His385, and His511.

The protein belongs to the class-II aminoacyl-tRNA synthetase family. Homodimer. Zn(2+) serves as cofactor.

It is found in the cytoplasm. It carries out the reaction tRNA(Thr) + L-threonine + ATP = L-threonyl-tRNA(Thr) + AMP + diphosphate + H(+). Catalyzes the attachment of threonine to tRNA(Thr) in a two-step reaction: L-threonine is first activated by ATP to form Thr-AMP and then transferred to the acceptor end of tRNA(Thr). Also edits incorrectly charged L-seryl-tRNA(Thr). This is Threonine--tRNA ligase from Mannheimia succiniciproducens (strain KCTC 0769BP / MBEL55E).